The chain runs to 137 residues: Small ribosomal subunit protein uS12 (137 aa).

Disordered regions lie at residues 1 to 22 and 35 to 57; these read MPTINQLVRKPRKSKVSKSKSP and ATNNAAPQKRGVATRVGTMTPKK. Positions 9–18 are enriched in basic residues; sequence RKPRKSKVSK. D102 bears the 3-methylthioaspartic acid mark.

The protein belongs to the universal ribosomal protein uS12 family. In terms of assembly, part of the 30S ribosomal subunit. Contacts proteins S8 and S17. May interact with IF1 in the 30S initiation complex.

Its function is as follows. With S4 and S5 plays an important role in translational accuracy. Functionally, interacts with and stabilizes bases of the 16S rRNA that are involved in tRNA selection in the A site and with the mRNA backbone. Located at the interface of the 30S and 50S subunits, it traverses the body of the 30S subunit contacting proteins on the other side and probably holding the rRNA structure together. The combined cluster of proteins S8, S12 and S17 appears to hold together the shoulder and platform of the 30S subunit. The sequence is that of Small ribosomal subunit protein uS12 from Leuconostoc mesenteroides subsp. mesenteroides (strain ATCC 8293 / DSM 20343 / BCRC 11652 / CCM 1803 / JCM 6124 / NCDO 523 / NBRC 100496 / NCIMB 8023 / NCTC 12954 / NRRL B-1118 / 37Y).